Here is a 211-residue protein sequence, read N- to C-terminus: Large ribosomal subunit protein bL25 (211 aa).

The tract at residues Ala188–Glu211 is disordered. Low complexity predominate over residues Ala201–Glu211.

The protein belongs to the bacterial ribosomal protein bL25 family. CTC subfamily. As to quaternary structure, part of the 50S ribosomal subunit; part of the 5S rRNA/L5/L18/L25 subcomplex. Contacts the 5S rRNA. Binds to the 5S rRNA independently of L5 and L18.

In terms of biological role, this is one of the proteins that binds to the 5S RNA in the ribosome where it forms part of the central protuberance. This chain is Large ribosomal subunit protein bL25, found in Colwellia psychrerythraea (strain 34H / ATCC BAA-681) (Vibrio psychroerythus).